The chain runs to 179 residues: ADP-ribosylation factor-like protein 5A (179 aa).

A lipid anchor (N-myristoyl glycine) is attached at G2. Residues 23-30 (GLDNAGKT), 66-70 (DIGGQ), 125-128 (NKQD), and A159 each bind GTP.

The protein belongs to the small GTPase superfamily. Arf family. Low amounts were found in most tissues examined with highest levels in brain, intestine and thymus.

In terms of biological role, lacks ADP-ribosylation enhancing activity. In Rattus norvegicus (Rat), this protein is ADP-ribosylation factor-like protein 5A (Arl5a).